Here is a 479-residue protein sequence, read N- to C-terminus: Protein C-ets-2 (479 aa).

One can recognise a PNT domain in the interval 88 to 173 (DTFSGFTKEQ…EHLEQMIKDS (86 aa)). Positions 373 to 453 (IQLWQFLLEL…SGKRYVYRFV (81 aa)) form a DNA-binding region, ETS.

It belongs to the ETS family.

The protein localises to the nucleus. In terms of biological role, probable transcription factor. The chain is Protein C-ets-2 (ETS2) from Gallus gallus (Chicken).